A 203-amino-acid chain; its full sequence is MLAIFLAALLFGFAFNVSPGAVFSETLRRGLTGGFRPALLVQLGSLIGDAVWALLGLTGLALLLGYEQVRIPLTLACAAYLAWLGVQGLRDAWSPPLAAEDAGEQGRNAFGAGAAISLSNPKNVVYWGALGSALAGIVDGTPNQAQSLVFFAGFMLSSLIWCFCCAALVDWLRRNTSLFWHRVSYAGCGVLLLGLAGLALRGL.

The next 5 membrane-spanning stretches (helical) occupy residues 3 to 23, 46 to 66, 69 to 89, 123 to 143, and 149 to 169; these read AIFLAALLFGFAFNVSPGAVF, LIGDAVWALLGLTGLALLLGY, VRIPLTLACAAYLAWLGVQGL, NVVYWGALGSALAGIVDGTPN, and VFFAGFMLSSLIWCFCCAALV.

Belongs to the Rht family.

Its subcellular location is the cell membrane. The polypeptide is Chemotactic transduction protein ChpE (chpE) (Pseudomonas aeruginosa (strain ATCC 15692 / DSM 22644 / CIP 104116 / JCM 14847 / LMG 12228 / 1C / PRS 101 / PAO1)).